We begin with the raw amino-acid sequence, 407 residues long: Peptidase T (407 aa).

Zn(2+) is bound at residue His-77. Residue Asp-79 is part of the active site. Position 138 (Asp-138) interacts with Zn(2+). The active-site Proton acceptor is Glu-172. Residues Glu-173, Asp-195, and His-377 each contribute to the Zn(2+) site.

The protein belongs to the peptidase M20B family. It depends on Zn(2+) as a cofactor.

Its subcellular location is the cytoplasm. The enzyme catalyses Release of the N-terminal residue from a tripeptide.. Functionally, cleaves the N-terminal amino acid of tripeptides. The protein is Peptidase T of Aeromonas salmonicida (strain A449).